The primary structure comprises 53 residues: Small, acid-soluble spore protein O (53 aa).

The tract at residues 1–53 (MVRKKANHSRPGMNAAKAQGKDAGLTSQFHAEIGQEPLNQAQRQNNKKRKKNQ) is disordered.

It belongs to the SspO family.

The protein resides in the spore core. This Halalkalibacterium halodurans (strain ATCC BAA-125 / DSM 18197 / FERM 7344 / JCM 9153 / C-125) (Bacillus halodurans) protein is Small, acid-soluble spore protein O.